Here is a 467-residue protein sequence, read N- to C-terminus: Serine/threonine-protein kinase US3 homolog (467 aa).

The tract at residues 64-155 (GPEVAPPART…PAGGVTREEA (92 aa)) is disordered. Residues 99-111 (NERRAATGDEKES) show a composition bias toward basic and acidic residues. The span at 117–144 (NESESESESESESESGADDGDWDDDDDA) shows a compositional bias: acidic residues. Residues 164–462 (FRIIRRLTPG…AAELLEHPVF (299 aa)) form the Protein kinase domain. Residues 170–178 (LTPGSEGRV) and K194 contribute to the ATP site. The active-site Proton acceptor is D279.

The protein belongs to the protein kinase superfamily. Ser/Thr protein kinase family. Phosphorylated by UL13 homolog; this phosphorylation regulates subsequent phosphorylation of UL31 and UL34 homologs by US3. Autophosphorylated.

Its subcellular location is the host cytoplasm. The protein resides in the host nucleus. It carries out the reaction L-seryl-[protein] + ATP = O-phospho-L-seryl-[protein] + ADP + H(+). The enzyme catalyses L-threonyl-[protein] + ATP = O-phospho-L-threonyl-[protein] + ADP + H(+). Functionally, multifunctional serine/threonine kinase that plays a role in several processes including egress of virus particles from the nucleus, modulation of the actin cytoskeleton and inhibition of apoptosis. Phosphorylates UL31 and UL34 homologs, two critical regulators of capsid budding from nucleus to endoplasmic reticulum, thereby facilitating virion egress. Modulates and redistributes host components of the nuclear envelope, including LMNA, emerin/EMD and the nuclear matrix protein MATR3. Phosphorylates envelope glycoprotein B (gB), probably to direct it to the cell surface. Promotes virus intracellular spread by restructuring host cell cytoskeleton. Blocks host apoptosis to extend cell survival and allow efficient viral replication. Promotes viral gene expression by phosphorylating host HDAC2 to reduce viral genome silencing. The protein is Serine/threonine-protein kinase US3 homolog of Bos taurus (Bovine).